Consider the following 123-residue polypeptide: Transmembrane protein 254 (123 aa).

The next 3 membrane-spanning stretches (helical) occupy residues 15–35 (LFWF…VFWP), 63–83 (NGYW…LVLC), and 95–115 (LLWF…LIAY).

Its subcellular location is the membrane. In Mus musculus (Mouse), this protein is Transmembrane protein 254.